We begin with the raw amino-acid sequence, 439 residues long: Glutamate--tRNA ligase 2 (439 aa).

A 'HIGH' region motif is present at residues 6–16; the sequence is PSPTGDMHIGN. Residues 232-236 carry the 'KMSKS' region motif; sequence KMSKR. ATP is bound at residue Lys-235.

This sequence belongs to the class-I aminoacyl-tRNA synthetase family. Glutamate--tRNA ligase type 1 subfamily. Monomer.

It localises to the cytoplasm. The enzyme catalyses tRNA(Glu) + L-glutamate + ATP = L-glutamyl-tRNA(Glu) + AMP + diphosphate. Its function is as follows. Catalyzes the attachment of glutamate to tRNA(Glu) in a two-step reaction: glutamate is first activated by ATP to form Glu-AMP and then transferred to the acceptor end of tRNA(Glu). In Helicobacter pylori (strain P12), this protein is Glutamate--tRNA ligase 2.